The sequence spans 259 residues: Adenosylcobinamide-GDP ribazoletransferase (259 aa).

Helical transmembrane passes span 36–56 (FSPL…ILLL), 65–85 (MPFI…VDGL), 108–128 (IGAS…AALF), 133–153 (LILF…IWAI), 175–195 (GFLI…FILI), 201–221 (IIST…ALII), and 238–258 (GASV…ILPA).

It belongs to the CobS family. Mg(2+) is required as a cofactor.

The protein resides in the cell inner membrane. It carries out the reaction alpha-ribazole + adenosylcob(III)inamide-GDP = adenosylcob(III)alamin + GMP + H(+). The enzyme catalyses alpha-ribazole 5'-phosphate + adenosylcob(III)inamide-GDP = adenosylcob(III)alamin 5'-phosphate + GMP + H(+). Its pathway is cofactor biosynthesis; adenosylcobalamin biosynthesis; adenosylcobalamin from cob(II)yrinate a,c-diamide: step 7/7. Functionally, joins adenosylcobinamide-GDP and alpha-ribazole to generate adenosylcobalamin (Ado-cobalamin). Also synthesizes adenosylcobalamin 5'-phosphate from adenosylcobinamide-GDP and alpha-ribazole 5'-phosphate. This chain is Adenosylcobinamide-GDP ribazoletransferase, found in Prochlorococcus marinus (strain SARG / CCMP1375 / SS120).